We begin with the raw amino-acid sequence, 245 residues long: Putative outer membrane protein RBE_0022 (245 aa).

Positions 1-23 are cleaved as a signal peptide; that stretch reads MIRMSKRLGVILFVSCISINSFA.

This sequence belongs to the OmpW/AlkL family.

Its subcellular location is the cell outer membrane. The sequence is that of Putative outer membrane protein RBE_0022 from Rickettsia bellii (strain RML369-C).